Here is a 295-residue protein sequence, read N- to C-terminus: MDMSSIASRLGLSGSRPVVRKAAELRRLCDVTFDSSVLGIGEVCKAIICLEIAASKFQVIFDRAEAVRMSGMSEKAYIRSFNALQNGLGVKTTLDVRELGIQFGCVRLIPFVQKGLSLYKERFLAALPPSRRASTDFGRPVFTAAAFYLCAKRHKLKVDKLKLIDLCGTSSSEFTTVSTSMADLCFDVFGIAKEKKDAKSIKGSRELLDVLPSKRKHDDDSDSSGESSGDDQDELDLPTYKRHKKMEKEAYNDWKSSVLSNKQTKPDPAKPRKQAQLNFKKKPSDMALEVSSAAN.

Residues 212 to 295 (PSKRKHDDDS…MALEVSSAAN (84 aa)) form a disordered region. The segment covering 220–236 (DSDSSGESSGDDQDELD) has biased composition (acidic residues). The span at 254-263 (WKSSVLSNKQ) shows a compositional bias: polar residues.

This sequence belongs to the ORC6 family. Component of the origin recognition complex (ORC) composed of at least ORC1, ORC2, ORC3, ORC4, ORC5 and ORC6. ORC is regulated in a cell-cycle and development dependent manner. It is sequentially assembled at the exit from anaphase of mitosis and disassembled as cells enter S phase.

It localises to the nucleus. Component of the origin recognition complex (ORC) that binds origins of replication. DNA-binding is ATP-dependent. The specific DNA sequences that define origins of replication have not been identified yet. ORC is required to assemble the pre-replication complex necessary to initiate DNA replication. This chain is Origin of replication complex subunit 6, found in Oryza sativa subsp. japonica (Rice).